A 201-amino-acid polypeptide reads, in one-letter code: Elongation factor Ts (201 aa).

The tract at residues T83–V86 is involved in Mg(2+) ion dislocation from EF-Tu.

Belongs to the EF-Ts family.

It is found in the cytoplasm. In terms of biological role, associates with the EF-Tu.GDP complex and induces the exchange of GDP to GTP. It remains bound to the aminoacyl-tRNA.EF-Tu.GTP complex up to the GTP hydrolysis stage on the ribosome. This is Elongation factor Ts from Methylacidiphilum infernorum (isolate V4) (Methylokorus infernorum (strain V4)).